Reading from the N-terminus, the 696-residue chain is Elongation factor G (696 aa).

The 275-residue stretch at 8–282 folds into the tr-type G domain; the sequence is KDYRNIGIMA…AVVDYLPSPL (275 aa). GTP contacts are provided by residues 17 to 24, 81 to 85, and 135 to 138; these read AHIDAGKT, DTPGH, and NKMD.

This sequence belongs to the TRAFAC class translation factor GTPase superfamily. Classic translation factor GTPase family. EF-G/EF-2 subfamily.

It localises to the cytoplasm. In terms of biological role, catalyzes the GTP-dependent ribosomal translocation step during translation elongation. During this step, the ribosome changes from the pre-translocational (PRE) to the post-translocational (POST) state as the newly formed A-site-bound peptidyl-tRNA and P-site-bound deacylated tRNA move to the P and E sites, respectively. Catalyzes the coordinated movement of the two tRNA molecules, the mRNA and conformational changes in the ribosome. In Mycoplasmopsis synoviae (strain 53) (Mycoplasma synoviae), this protein is Elongation factor G.